A 509-amino-acid polypeptide reads, in one-letter code: Proton-gated ion channel subunit pbo-5 (509 aa).

A signal peptide spans 1 to 21 (MTRLSILQHLLTFLILSKINA). Residues 22 to 275 (TSTTESYFDS…ISLKRRPLFY (254 aa)) are Extracellular-facing. A disulfide bond links Cys193 and Cys207. Helical transmembrane passes span 276–296 (MVTL…GLFA), 310–330 (LGVT…EKVP), and 336–356 (VPLL…AAMT). The Cytoplasmic portion of the chain corresponds to 357–487 (TGIVMKVHRL…GYVRISERLD (131 aa)). A helical membrane pass occupies residues 488 to 508 (ILFMFLFLSTVTIPVAVLFYL).

It belongs to the ligand-gated ion channel (TC 1.A.9) family. Acetylcholine receptor (TC 1.A.9.1) subfamily. The functional channel is a heterooligomer of pbo-5 and pbo-6. May self-associate to form homooligomers with negligible ion channel activity. Expressed in the posterior body muscles. Also detected in the RIFL, RIFR and RIS head neurons.

It is found in the membrane. In terms of biological role, forms a proton-gated ion channel with pbo-6 that is activated by acidification of the posterior coelomic space, leading to posterior body wall muscle contraction (pBoc) during the defecation cycle. Probably by regulating the defecation motor program, required for fatty acid uptake by intestinal cells. Does not bind neurotransmitters such as acetylcholine, gamma-aminobutyric acid, glycine, serotonin, glutamate or choline. The chain is Proton-gated ion channel subunit pbo-5 from Caenorhabditis elegans.